We begin with the raw amino-acid sequence, 865 residues long: ABC transporter ATP-binding/permease protein Rv1747 (865 aa).

The FHA 1 domain occupies 29 to 78; sequence VVVGRDLRADVRVAHPLISRAHLLLRFDQGRWVAIDNGSLNGLYLNNRRV. The tract at residues 104-205 is disordered; the sequence is GRHRGSAGRP…PAGARGGTEA (102 aa). Over residues 135 to 156 the composition is skewed to low complexity; it reads PQTGTLGSGQLQQLPPATTRIP. At T152 the chain carries Phosphothreonine. A compositionally biased stretch (pro residues) spans 157–166; that stretch reads AAPPSGPQPR. A Phosphothreonine modification is found at T210. An FHA 2 domain is found at 230-279; it reads VRIGRANDNDIVIPEVLASRHHATLVPTPGGTEIRDNRSINGTFVNGARV. The ABC transporter domain maps to 319-552; the sequence is LDVRGVTWTI…VMGTTNWADI (234 aa). An ATP-binding site is contributed by 352–359; sequence GPSGAGKS. The 215-residue stretch at 596–810 folds into the ABC transmembrane type-2 domain; the sequence is RQFSTIARRQ…TPARWGFAAS (215 aa). The next 6 helical transmembrane spans lie at 614–634, 652–672, 700–720, 740–760, 767–787, and 836–856; these read GYFVFLALLPFIMGALSMSVP, PGQILVLLNVGAVFMGTALTI, VCVYTVLAVVQSAIVTVIVLV, FVDVAVTCVASAMLGLALSAI, IMPLLVVAVMSQLVFSGGMIP, and SAWWFDMAMLVALSVIYVGFV.

In the central section; belongs to the ABC transporter superfamily. The protein in the C-terminal section; belongs to the ABC-2 integral membrane protein family. Homodimer. Interacts with PknF. Phosphorylated by PknF. Can probably be phosphorylated in vivo by other kinases when PknF is missing.

Its subcellular location is the cell membrane. Function is positively regulated by phosphorylation. Functionally, involved in the translocation of an unknown substrate across the membrane. Transmembrane domains (TMD) form a pore in the membrane and the ATP-binding domain (NBD) is responsible for energy generation. Required for virulence. The sequence is that of ABC transporter ATP-binding/permease protein Rv1747 from Mycobacterium tuberculosis (strain ATCC 25618 / H37Rv).